The sequence spans 132 residues: HLALLLILENQASGRRLRGSARAQDPVVSRVWHKEEVEESESSRGQDFDKRRFWEKDDPTGEHVSVRHEHLEKSHIRFKEDSIDDSGSAGGLNPSKGHLRLKRHDAMEELVSVEDQALANGADPGKSNMQRV.

An N-terminal signal peptide occupies residues His-1–Gly-14. The segment covering His-33–Asp-81 has biased composition (basic and acidic residues). Disordered regions lie at residues His-33 to His-104 and Val-113 to Val-132. The propeptide occupies His-104–Val-132.

The protein to the SVP-1/-3/-4 precursor, particularly in regions where protein processing must occur.

It localises to the secreted. In Cavia porcellus (Guinea pig), this protein is Seminal vesicle protein SVP-2.